Reading from the N-terminus, the 248-residue chain is 2,3-bisphosphoglycerate-dependent phosphoglycerate mutase (248 aa).

Substrate-binding positions include 8–15 (RHGESTWN), 21–22 (TG), Arg-60, 87–90 (ERHY), Lys-98, 114–115 (RR), and 183–184 (GN). His-9 acts as the Tele-phosphohistidine intermediate in catalysis. The active-site Proton donor/acceptor is Glu-87.

The protein belongs to the phosphoglycerate mutase family. BPG-dependent PGAM subfamily. Homodimer.

It catalyses the reaction (2R)-2-phosphoglycerate = (2R)-3-phosphoglycerate. It functions in the pathway carbohydrate degradation; glycolysis; pyruvate from D-glyceraldehyde 3-phosphate: step 3/5. Its function is as follows. Catalyzes the interconversion of 2-phosphoglycerate and 3-phosphoglycerate. This chain is 2,3-bisphosphoglycerate-dependent phosphoglycerate mutase, found in Burkholderia cenocepacia (strain ATCC BAA-245 / DSM 16553 / LMG 16656 / NCTC 13227 / J2315 / CF5610) (Burkholderia cepacia (strain J2315)).